A 301-amino-acid chain; its full sequence is Phosphatidylserine decarboxylase proenzyme (301 aa).

Active-site charge relay system; for autoendoproteolytic cleavage activity residues include Asp-117, His-173, and Ser-260. Ser-260 serves as the catalytic Schiff-base intermediate with substrate; via pyruvic acid; for decarboxylase activity. The residue at position 260 (Ser-260) is a Pyruvic acid (Ser); by autocatalysis.

It belongs to the phosphatidylserine decarboxylase family. PSD-B subfamily. Prokaryotic type II sub-subfamily. Heterodimer of a large membrane-associated beta subunit and a small pyruvoyl-containing alpha subunit. Pyruvate is required as a cofactor. Is synthesized initially as an inactive proenzyme. Formation of the active enzyme involves a self-maturation process in which the active site pyruvoyl group is generated from an internal serine residue via an autocatalytic post-translational modification. Two non-identical subunits are generated from the proenzyme in this reaction, and the pyruvate is formed at the N-terminus of the alpha chain, which is derived from the carboxyl end of the proenzyme. The autoendoproteolytic cleavage occurs by a canonical serine protease mechanism, in which the side chain hydroxyl group of the serine supplies its oxygen atom to form the C-terminus of the beta chain, while the remainder of the serine residue undergoes an oxidative deamination to produce ammonia and the pyruvoyl prosthetic group on the alpha chain. During this reaction, the Ser that is part of the protease active site of the proenzyme becomes the pyruvoyl prosthetic group, which constitutes an essential element of the active site of the mature decarboxylase.

The protein localises to the cell membrane. It carries out the reaction a 1,2-diacyl-sn-glycero-3-phospho-L-serine + H(+) = a 1,2-diacyl-sn-glycero-3-phosphoethanolamine + CO2. The protein operates within phospholipid metabolism; phosphatidylethanolamine biosynthesis; phosphatidylethanolamine from CDP-diacylglycerol: step 2/2. Functionally, catalyzes the formation of phosphatidylethanolamine (PtdEtn) from phosphatidylserine (PtdSer). This is Phosphatidylserine decarboxylase proenzyme from Chlamydia muridarum (strain MoPn / Nigg).